The chain runs to 210 residues: Glutathione S-transferase P 10 (210 aa).

Residues 2 to 81 (AVPQLYYFTI…HLGRVHGLNG (80 aa)) enclose the GST N-terminal domain. Residues Tyr-8, Trp-41, Lys-45, 52-53 (QL), and 65-66 (QT) contribute to the glutathione site. In terms of domain architecture, GST C-terminal spans 83–200 (NEQEATFLDM…YLEKRKADKV (118 aa)).

This sequence belongs to the GST superfamily. Pi family. In terms of assembly, homodimer. Expressed in cells at the mouth and adjacent to the pharyngeal bulbs of the head and also in the tail.

The enzyme catalyses RX + glutathione = an S-substituted glutathione + a halide anion + H(+). Its function is as follows. Conjugation of reduced glutathione to a wide number of exogenous and endogenous hydrophobic electrophiles. Responsible for approximately one-third of 4-hydroxy-2-nonenal conjugation. May play a role in the detoxification of reactive oxygen species produced during pathogenic bacterial infection. This Caenorhabditis elegans protein is Glutathione S-transferase P 10.